Reading from the N-terminus, the 2254-residue chain is Acetyl-CoA carboxylase 1 (2254 aa).

The Biotin carboxylation domain occupies 36–543 (PIHSILIANN…HTGWLDSRIA (508 aa)). The 193-residue stretch at 189–381 (NSNLVTIPEE…LPAAQVAVGM (193 aa)) folds into the ATP-grasp domain. 215–272 (CQVVGYPAMIKASWGGGGKGIRKVHNDDEVRALFKQVQGEVPGSPIFIMKVASQSRHL) contacts ATP. Residues E338, E352, and N354 each coordinate Mg(2+). Mn(2+) contacts are provided by E338, E352, and N354. The active site involves R356. One can recognise a Biotinyl-binding domain in the interval 670-744 (LQNDHDPSKL…QAGELIANLD (75 aa)). K711 carries the post-translational modification N6-biotinyllysine. Residue T1031 is modified to Phosphothreonine. S1192 bears the Phosphoserine mark. The 340-residue stretch at 1492-1831 (QYKPLGYLDR…YVGGPLPVLA (340 aa)) folds into the CoA carboxyltransferase N-terminal domain. Residues 1492-2150 (QYKPLGYLDR…ESSLVKNVRE (659 aa)) are carboxyltransferase. Residues R1740, K2041, and R2043 each contribute to the CoA site. A CoA carboxyltransferase C-terminal domain is found at 1835-2150 (PPERIVEYVP…ESSLVKNVRE (316 aa)).

In terms of assembly, homodimer. The cofactor is biotin. Requires Mg(2+) as cofactor. Mn(2+) is required as a cofactor. As to expression, expressed in roots, trichomes, epidermal leaf cells, siliques, petals, anthers, and seeds.

The protein resides in the cytoplasm. Its subcellular location is the cytosol. The enzyme catalyses hydrogencarbonate + acetyl-CoA + ATP = malonyl-CoA + ADP + phosphate + H(+). The catalysed reaction is N(6)-biotinyl-L-lysyl-[protein] + hydrogencarbonate + ATP = N(6)-carboxybiotinyl-L-lysyl-[protein] + ADP + phosphate + H(+). The protein operates within lipid metabolism; malonyl-CoA biosynthesis; malonyl-CoA from acetyl-CoA: step 1/1. In terms of biological role, multifunctional enzyme that catalyzes the carboxylation of acetyl-CoA, forming malonyl-CoA, which is used in the plastid for fatty acid synthesis and in the cytosol in various biosynthetic pathways including fatty acid elongation. Required for very long chain fatty acids elongation. Necessary for embryo and plant development. Plays a central function in embryo morphogenesis, especially in apical meristem development. Involved in cell proliferation and tissue patterning. May act as a repressor of cytokinin response. The protein is Acetyl-CoA carboxylase 1 (ACC1) of Arabidopsis thaliana (Mouse-ear cress).